The primary structure comprises 139 residues: Ribosomal RNA large subunit methyltransferase H (139 aa).

Residues Leu56, Gly88, and 107–112 contribute to the S-adenosyl-L-methionine site; that span reads LSLMTF.

This sequence belongs to the RNA methyltransferase RlmH family. In terms of assembly, homodimer.

Its subcellular location is the cytoplasm. It catalyses the reaction pseudouridine(1915) in 23S rRNA + S-adenosyl-L-methionine = N(3)-methylpseudouridine(1915) in 23S rRNA + S-adenosyl-L-homocysteine + H(+). Functionally, specifically methylates the pseudouridine at position 1915 (m3Psi1915) in 23S rRNA. This Coprothermobacter proteolyticus (strain ATCC 35245 / DSM 5265 / OCM 4 / BT) protein is Ribosomal RNA large subunit methyltransferase H.